We begin with the raw amino-acid sequence, 754 residues long: 5-methyltetrahydropteroyltriglutamate--homocysteine methyltransferase (754 aa).

Residues 16-19 and Lys-114 each bind 5-methyltetrahydropteroyltri-L-glutamate; that span reads RELK. L-homocysteine-binding positions include 430-432 and Glu-483; that span reads IGS. Residues 430-432 and Glu-483 each bind L-methionine; that span reads IGS. 5-methyltetrahydropteroyltri-L-glutamate contacts are provided by residues 514-515 and Trp-560; that span reads RC. L-homocysteine is bound at residue Asp-598. Asp-598 serves as a coordination point for L-methionine. Glu-604 serves as a coordination point for 5-methyltetrahydropteroyltri-L-glutamate. Zn(2+) is bound by residues His-640, Cys-642, and Glu-664. His-693 acts as the Proton donor in catalysis. Cys-725 contributes to the Zn(2+) binding site.

The protein belongs to the vitamin-B12 independent methionine synthase family. Zn(2+) is required as a cofactor.

The catalysed reaction is 5-methyltetrahydropteroyltri-L-glutamate + L-homocysteine = tetrahydropteroyltri-L-glutamate + L-methionine. It participates in amino-acid biosynthesis; L-methionine biosynthesis via de novo pathway; L-methionine from L-homocysteine (MetE route): step 1/1. Functionally, catalyzes the transfer of a methyl group from 5-methyltetrahydrofolate to homocysteine resulting in methionine formation. The polypeptide is 5-methyltetrahydropteroyltriglutamate--homocysteine methyltransferase (Aeromonas salmonicida (strain A449)).